A 449-amino-acid chain; its full sequence is Trigger factor (449 aa).

The region spanning 173 to 258 is the PPIase FKBP-type domain; that stretch reads GDRVTVDFVG…LKKVEWPHLP (86 aa).

This sequence belongs to the FKBP-type PPIase family. Tig subfamily.

The protein resides in the cytoplasm. It catalyses the reaction [protein]-peptidylproline (omega=180) = [protein]-peptidylproline (omega=0). Functionally, involved in protein export. Acts as a chaperone by maintaining the newly synthesized protein in an open conformation. Functions as a peptidyl-prolyl cis-trans isomerase. The sequence is that of Trigger factor from Burkholderia pseudomallei (strain 1710b).